Here is a 340-residue protein sequence, read N- to C-terminus: ATP-dependent 6-phosphofructokinase (340 aa).

G11 contacts ATP. 21-25 lines the ADP pocket; that stretch reads RAVVR. ATP is bound by residues 72 to 73 and 102 to 105; these read RY and GDGS. Residue D103 participates in Mg(2+) binding. Position 125–127 (125–127) interacts with substrate; sequence TID. D127 (proton acceptor) is an active-site residue. R154 serves as a coordination point for ADP. Substrate contacts are provided by residues R162 and 169-171; that span reads MGR. ADP is bound by residues 185–187, K211, and 213–215; these read GAD and KNH. Residues E222, R244, and 250–253 each bind substrate; that span reads HIQR.

It belongs to the phosphofructokinase type A (PFKA) family. ATP-dependent PFK group I subfamily. Prokaryotic clade 'B1' sub-subfamily. As to quaternary structure, homotetramer. The cofactor is Mg(2+).

The protein localises to the cytoplasm. It catalyses the reaction beta-D-fructose 6-phosphate + ATP = beta-D-fructose 1,6-bisphosphate + ADP + H(+). Its pathway is carbohydrate degradation; glycolysis; D-glyceraldehyde 3-phosphate and glycerone phosphate from D-glucose: step 3/4. Its activity is regulated as follows. Allosterically activated by ADP and other diphosphonucleosides, and allosterically inhibited by phosphoenolpyruvate. Its function is as follows. Catalyzes the phosphorylation of D-fructose 6-phosphate to fructose 1,6-bisphosphate by ATP, the first committing step of glycolysis. The sequence is that of ATP-dependent 6-phosphofructokinase from Lactococcus lactis subsp. lactis (Streptococcus lactis).